Here is a 1592-residue protein sequence, read N- to C-terminus: ABC transporter ATP-binding protein/permease VMR1 (1592 aa).

The Vacuolar segment spans residues 1 to 33; it reads MGTDPLIIRNNGSFWEVDDFTRLGRTQLLSYYL. A glycan (N-linked (GlcNAc...) asparagine) is linked at Asn-11. The helical transmembrane segment at 34–54 threads the bilayer; that stretch reads PLAIIASIGIFALCRSGLSRY. Topologically, residues 55 to 74 are cytoplasmic; the sequence is VRSAECDLVNEYLFGAQEER. A helical membrane pass occupies residues 75 to 95; it reads KEDNSIERLLRNSNTQANYVN. Residues 96-100 are Vacuolar-facing; the sequence is VKKQG. The chain crosses the membrane as a helical span at residues 101 to 121; sequence RILKLRHFDITTIDVKQIDAK. Topologically, residues 122-131 are cytoplasmic; the sequence is NHGGLTFSRP. Residues 132–152 form a helical membrane-spanning segment; the sequence is STSDHLRKSSEIVLMSLQIIG. At 153-170 the chain is on the vacuolar side; sequence LSFLRVTKINIELTNRDV. Residues 171 to 191 form a helical membrane-spanning segment; the sequence is TTLLLFWLILLSLSILRVYKR. Residues 192-329 lie on the Cytoplasmic side of the membrane; that stretch reads STNLWAICFT…NKHINNLTLA (138 aa). Residues 330-350 form a helical membrane-spanning segment; that stretch reads LFESFKTYLLIGMLWVLVNSI. The region spanning 338–632 is the ABC transmembrane type-1 1 domain; sequence LLIGMLWVLV…LSNMLSFINQ (295 aa). Over 351 to 379 the chain is Vacuolar; sequence VNLLPTILMKRFLEIVDNPNRSSSCMNLA. The N-linked (GlcNAc...) asparagine glycan is linked to Asn-370. Residues 380–400 traverse the membrane as a helical segment; the sequence is WLYIIGMFICRLTLAICNSQG. Residues 401–465 lie on the Cytoplasmic side of the membrane; it reads QFVSDKICLR…SFKVSELANY (65 aa). The chain crosses the membrane as a helical span at residues 466–486; the sequence is LYVTVQAVIMIIVVVGLLFNF. At 487-489 the chain is on the vacuolar side; the sequence is LGV. A helical transmembrane segment spans residues 490–510; that stretch reads SAFAGISIILVMFPLNFLLAN. Over 511 to 572 the chain is Cytoplasmic; sequence LLGKFQKQTL…SLLKKSLVWS (62 aa). Residues 573–593 traverse the membrane as a helical segment; it reads VTSFLWFVTPTLVTGVTFAIC. The Vacuolar segment spans residues 594–614; it reads TFVQHEDLNAPLAFTTLSLFT. The helical transmembrane segment at 615–635 threads the bilayer; the sequence is LLKTPLDQLSNMLSFINQSKV. At 636-989 the chain is on the cytoplasmic side; that stretch reads SLKRISDFLR…ALTALFALYI (354 aa). The ABC transporter 1 domain occupies 664–908; the sequence is IEFKNATLTW…GLFKEKYVQL (245 aa). 702-709 contacts ATP; that stretch reads GSTGSGKS. Residues 981–1282 form the ABC transmembrane type-1 2 domain; it reads LTALFALYIT…LVRLYSTFEM (302 aa). Residues 990–1010 form a helical membrane-spanning segment; the sequence is TAQILFISQSWWIRHWVNDTN. Residues 1011 to 1051 lie on the Vacuolar side of the membrane; the sequence is VRINAPGFAMDTLPLKGMTDSSKNKHNAFYYLTVYFLIGII. The helical transmembrane segment at 1052–1072 threads the bilayer; that stretch reads QAMLGGFKTMMTFLSGMRASR. At 1073 to 1115 the chain is on the cytoplasmic side; the sequence is KIFNNLLDLVLHAQIRFFDVTPVGRIMNRFSKDIEGVDQELIP. The chain crosses the membrane as a helical span at residues 1116–1136; sequence YLEVTIFCLIQCASIIFLITV. Residue Ile-1137 is a topological domain, vacuolar. The helical transmembrane segment at 1138–1158 threads the bilayer; it reads TPRFLTVAVIVFVLYFFVGKW. At 1159–1229 the chain is on the cytoplasmic side; that stretch reads YLTASRELKR…VTVKWFSFRV (71 aa). The chain crosses the membrane as a helical span at residues 1230–1250; that stretch reads DMIGAFIVLASGSFILLNIAN. The Vacuolar portion of the chain corresponds to 1251–1252; that stretch reads ID. A helical transmembrane segment spans residues 1253–1273; sequence SGLAGISLTYAILFTDGALWL. Residues 1274-1592 lie on the Cytoplasmic side of the membrane; it reads VRLYSTFEMN…IAKQSSKMMK (319 aa). Positions 1323–1572 constitute an ABC transporter 2 domain; the sequence is IEIENLSLRY…ERGIFYSMCR (250 aa). 1357–1364 contributes to the ATP binding site; that stretch reads GRTGAGKS.

This sequence belongs to the ABC transporter superfamily. In terms of assembly, ABC transporter which may be involved in multidrug resistance.

The protein resides in the vacuole membrane. The chain is ABC transporter ATP-binding protein/permease VMR1 (VMR1) from Saccharomyces cerevisiae (strain ATCC 204508 / S288c) (Baker's yeast).